The following is a 363-amino-acid chain: Probable F-box protein At4g22165 (363 aa).

The F-box domain maps to Pro7 to Leu56.

This chain is Probable F-box protein At4g22165, found in Arabidopsis thaliana (Mouse-ear cress).